The sequence spans 204 residues: Leucyl/phenylalanyl-tRNA--protein transferase (204 aa).

Belongs to the L/F-transferase family.

It localises to the cytoplasm. It carries out the reaction N-terminal L-lysyl-[protein] + L-leucyl-tRNA(Leu) = N-terminal L-leucyl-L-lysyl-[protein] + tRNA(Leu) + H(+). The enzyme catalyses N-terminal L-arginyl-[protein] + L-leucyl-tRNA(Leu) = N-terminal L-leucyl-L-arginyl-[protein] + tRNA(Leu) + H(+). It catalyses the reaction L-phenylalanyl-tRNA(Phe) + an N-terminal L-alpha-aminoacyl-[protein] = an N-terminal L-phenylalanyl-L-alpha-aminoacyl-[protein] + tRNA(Phe). In terms of biological role, functions in the N-end rule pathway of protein degradation where it conjugates Leu, Phe and, less efficiently, Met from aminoacyl-tRNAs to the N-termini of proteins containing an N-terminal arginine or lysine. The polypeptide is Leucyl/phenylalanyl-tRNA--protein transferase (Brucella melitensis biotype 2 (strain ATCC 23457)).